A 231-amino-acid chain; its full sequence is Ribosome maturation factor RimM (231 aa).

The interval 1–29 is disordered; that stretch reads MSERDSGSSGRAKAKRQPGAKAPFGPFVR. The PRC barrel domain occupies 150–231; it reads TDEYYWVDLV…KIIVDWEADY (82 aa).

It belongs to the RimM family. Binds ribosomal protein uS19.

It localises to the cytoplasm. In terms of biological role, an accessory protein needed during the final step in the assembly of 30S ribosomal subunit, possibly for assembly of the head region. Essential for efficient processing of 16S rRNA. May be needed both before and after RbfA during the maturation of 16S rRNA. It has affinity for free ribosomal 30S subunits but not for 70S ribosomes. This Paraburkholderia phymatum (strain DSM 17167 / CIP 108236 / LMG 21445 / STM815) (Burkholderia phymatum) protein is Ribosome maturation factor RimM.